The chain runs to 160 residues: 2-C-methyl-D-erythritol 2,4-cyclodiphosphate synthase (160 aa).

Residues Asp11 and His13 each contribute to the a divalent metal cation site. Residues 11 to 13 (DVH) and 37 to 38 (HS) contribute to the 4-CDP-2-C-methyl-D-erythritol 2-phosphate site. His45 lines the a divalent metal cation pocket. 4-CDP-2-C-methyl-D-erythritol 2-phosphate-binding positions include 59–61 (DIG), 64–68 (FPDTD), 103–109 (AQAPKMA), 135–138 (TTTE), Phe142, and Arg145.

It belongs to the IspF family. As to quaternary structure, homotrimer. The cofactor is a divalent metal cation.

The enzyme catalyses 4-CDP-2-C-methyl-D-erythritol 2-phosphate = 2-C-methyl-D-erythritol 2,4-cyclic diphosphate + CMP. It participates in isoprenoid biosynthesis; isopentenyl diphosphate biosynthesis via DXP pathway; isopentenyl diphosphate from 1-deoxy-D-xylulose 5-phosphate: step 4/6. Its function is as follows. Involved in the biosynthesis of isopentenyl diphosphate (IPP) and dimethylallyl diphosphate (DMAPP), two major building blocks of isoprenoid compounds. Catalyzes the conversion of 4-diphosphocytidyl-2-C-methyl-D-erythritol 2-phosphate (CDP-ME2P) to 2-C-methyl-D-erythritol 2,4-cyclodiphosphate (ME-CPP) with a corresponding release of cytidine 5-monophosphate (CMP). The chain is 2-C-methyl-D-erythritol 2,4-cyclodiphosphate synthase from Thioalkalivibrio sulfidiphilus (strain HL-EbGR7).